The sequence spans 453 residues: Trigger factor (453 aa).

The 86-residue stretch at Gly171–Val256 folds into the PPIase FKBP-type domain.

This sequence belongs to the FKBP-type PPIase family. Tig subfamily.

It localises to the cytoplasm. It carries out the reaction [protein]-peptidylproline (omega=180) = [protein]-peptidylproline (omega=0). Functionally, involved in protein export. Acts as a chaperone by maintaining the newly synthesized protein in an open conformation. Functions as a peptidyl-prolyl cis-trans isomerase. This Rhodopseudomonas palustris (strain BisB5) protein is Trigger factor.